The following is a 141-amino-acid chain: Putative nickel-responsive regulator (141 aa).

Ni(2+)-binding residues include His80, His91, His93, and Cys99.

It belongs to the transcriptional regulatory CopG/NikR family. Requires Ni(2+) as cofactor.

Its function is as follows. Transcriptional regulator. The sequence is that of Putative nickel-responsive regulator from Methanococcus maripaludis (strain C6 / ATCC BAA-1332).